Consider the following 417-residue polypeptide: Dibenzothiophene monooxygenase (417 aa).

A helical N-terminus region spans residues 18–124 (NDPVAVARGL…HLYTQIAQNN (107 aa)). FMN contacts are provided by residues Tyr96, 129–134 (NASSEN), 159–163 (KHFCS), Arg282, 369–370 (AR), and His391. Residues 125-233 (WWTGNASSEN…KVEPDEVLGA (109 aa)) form a central beta-barrel N-terminus region. The segment at 131 to 142 (SSENNSHVLDWK) is lid loop. The tract at residues 234–417 (PNAFVLAFIQ…GQYPIPGFTS (184 aa)) is helical C-terminus.

Belongs to the DszC flavin monooxygenase family. Homotetramer formed by a dimer of dimers; FMN binds between monomers of the homodimer.

It localises to the cytoplasm. The catalysed reaction is dibenzothiophene + 2 FMNH2 + 2 O2 = dibenzothiophene 5,5-dioxide + 2 FMN + 2 H2O + 2 H(+). The enzyme catalyses dibenzothiophene + FMNH2 + O2 = dibenzothiophene 5-oxide + FMN + H2O + H(+). It catalyses the reaction dibenzothiophene 5-oxide + FMNH2 + O2 = dibenzothiophene 5,5-dioxide + FMN + H2O + H(+). It participates in sulfur metabolism; dibenzothiophene degradation. DBT degradation completely inhibited by Cu(2+), Mn(2+), p-chloromercuribenzoic acid, 2,2-bipyridyl, 1,10-phenanthroline, and strongly inhibited by Zn(2+), 5,5'- Dithiobis(2-nitrobenzoic acid) and 8-quinolinol. Catalyzes the first step of the '4S' desulfurization pathway that removes covalently bound sulfur from dibenzothiophene (DBT) without breaking carbon-carbon bonds. Sulfur dioxygenase which converts DBT to DBT-sulfone (DBTO2 or DBT 5,5-dioxide) in a stepwise manner. Also acts on thioxanthen-9-one and 4,6-dimethyl DBT and 2,8-dimethyl DBT. The protein is Dibenzothiophene monooxygenase of Rhodococcus erythropolis (Arthrobacter picolinophilus).